Consider the following 90-residue polypeptide: Probable Fe(2+)-trafficking protein (90 aa).

The protein belongs to the Fe(2+)-trafficking protein family.

Functionally, could be a mediator in iron transactions between iron acquisition and iron-requiring processes, such as synthesis and/or repair of Fe-S clusters in biosynthetic enzymes. The protein is Probable Fe(2+)-trafficking protein of Paraburkholderia xenovorans (strain LB400).